We begin with the raw amino-acid sequence, 430 residues long: UDP-N-acetylmuramoylalanine--D-glutamate ligase (430 aa).

Residue 109–115 (GTDGKST) coordinates ATP.

The protein belongs to the MurCDEF family.

It is found in the cytoplasm. It carries out the reaction UDP-N-acetyl-alpha-D-muramoyl-L-alanine + D-glutamate + ATP = UDP-N-acetyl-alpha-D-muramoyl-L-alanyl-D-glutamate + ADP + phosphate + H(+). It participates in cell wall biogenesis; peptidoglycan biosynthesis. Cell wall formation. Catalyzes the addition of glutamate to the nucleotide precursor UDP-N-acetylmuramoyl-L-alanine (UMA). This Thermotoga petrophila (strain ATCC BAA-488 / DSM 13995 / JCM 10881 / RKU-1) protein is UDP-N-acetylmuramoylalanine--D-glutamate ligase.